Here is a 471-residue protein sequence, read N- to C-terminus: Tryptophanase (471 aa).

N6-acetyllysine occurs at positions 5, 115, and 156. Lysine 270 is modified (N6-(pyridoxal phosphate)lysine). At lysine 450 the chain carries N6-acetyllysine.

It belongs to the beta-eliminating lyase family. Homotetramer. Pyridoxal 5'-phosphate serves as cofactor.

It catalyses the reaction L-tryptophan + H2O = indole + pyruvate + NH4(+). It functions in the pathway amino-acid degradation; L-tryptophan degradation via pyruvate pathway; indole and pyruvate from L-tryptophan: step 1/1. This is Tryptophanase from Escherichia coli O9:H4 (strain HS).